A 1796-amino-acid chain; its full sequence is Y' element ATP-dependent helicase protein 1 copy 5 (1796 aa).

Residues 743 to 767 form a disordered region; the sequence is AGEAASSDHDQKISRVTRKRPREPK. The Helicase ATP-binding domain occupies 797–974; that stretch reads EIYMADTPSV…LQRIGLTGLA (178 aa). 810–817 contacts ATP; sequence APPGYGKT. Residues 1031-1180 form the Helicase C-terminal domain; sequence KLLLALFEIE…EFYGLESKKG (150 aa). 2 disordered regions span residues 1254-1278 and 1294-1421; these read ANAS…NVRT and TTES…DINK. The segment covering 1294 to 1397 has biased composition (low complexity); that stretch reads TTESTNSSTN…ATTTESTNAS (104 aa). Positions 1398–1421 are enriched in basic and acidic residues; it reads AKEDANKDGNAEDNRFHPVTDINK.

It belongs to the helicase family. Yeast subtelomeric Y' repeat subfamily.

Catalyzes DNA unwinding and is involved in telomerase-independent telomere maintenance. The polypeptide is Y' element ATP-dependent helicase protein 1 copy 5 (YRF1-5) (Saccharomyces cerevisiae (strain ATCC 204508 / S288c) (Baker's yeast)).